We begin with the raw amino-acid sequence, 163 residues long: MNHYLTPDLCDAYPELVQVLEPMFSNFGGRDSFGGEIVTIKCFEDNSLVKEQAELKGNGKVLVVDGGGSLRCALLGDMIAEKAAKNGWEGLVIYGCIRDVDVIAQTDLGVQALASHPKKTEKRGLGDLNVPVTFAGVTFHPGQYIYADNNGVIISPSPLKMPE.

Substrate is bound by residues 76–79 and Arg-98; that span reads GDMI. Asp-99 contacts a divalent metal cation.

The protein belongs to the class II aldolase/RraA-like family. In terms of assembly, homotrimer. A divalent metal cation is required as a cofactor.

It catalyses the reaction 4-hydroxy-4-methyl-2-oxoglutarate = 2 pyruvate. The catalysed reaction is oxaloacetate + H(+) = pyruvate + CO2. Functionally, catalyzes the aldol cleavage of 4-hydroxy-4-methyl-2-oxoglutarate (HMG) into 2 molecules of pyruvate. Also contains a secondary oxaloacetate (OAA) decarboxylase activity due to the common pyruvate enolate transition state formed following C-C bond cleavage in the retro-aldol and decarboxylation reactions. The chain is Putative 4-hydroxy-4-methyl-2-oxoglutarate aldolase from Pseudomonas fluorescens (strain Pf0-1).